A 138-amino-acid chain; its full sequence is Ribulose bisphosphate carboxylase small subunit (138 aa).

Belongs to the RuBisCO small chain family. Heterohexadecamer of 8 large and 8 small subunits.

The protein localises to the plastid. It localises to the chloroplast. Functionally, ruBisCO catalyzes two reactions: the carboxylation of D-ribulose 1,5-bisphosphate, the primary event in carbon dioxide fixation, as well as the oxidative fragmentation of the pentose substrate in the photorespiration process. Both reactions occur simultaneously and in competition at the same active site. Although the small subunit is not catalytic it is essential for maximal activity. Carbon dioxide and oxygen bind in the same pocket of the enzyme in a similar manner. The sequence is that of Ribulose bisphosphate carboxylase small subunit from Galdieria sulphuraria (Red alga).